Reading from the N-terminus, the 507-residue chain is ATP synthase subunit alpha, chloroplastic (507 aa).

170-177 (GDRQTGKT) provides a ligand contact to ATP.

This sequence belongs to the ATPase alpha/beta chains family. In terms of assembly, F-type ATPases have 2 components, CF(1) - the catalytic core - and CF(0) - the membrane proton channel. CF(1) has five subunits: alpha(3), beta(3), gamma(1), delta(1), epsilon(1). CF(0) has four main subunits: a, b, b' and c.

The protein resides in the plastid. The protein localises to the chloroplast thylakoid membrane. The enzyme catalyses ATP + H2O + 4 H(+)(in) = ADP + phosphate + 5 H(+)(out). In terms of biological role, produces ATP from ADP in the presence of a proton gradient across the membrane. The alpha chain is a regulatory subunit. This chain is ATP synthase subunit alpha, chloroplastic, found in Pelargonium hortorum (Common geranium).